The chain runs to 360 residues: Phospho-N-acetylmuramoyl-pentapeptide-transferase (360 aa).

Helical transmembrane passes span Ala26–Glu46, Met74–Gly94, Tyr97–Tyr117, Tyr134–Asn154, Val168–Ser188, Gly199–Ser219, Ser236–Phe256, Val263–Leu283, Ile288–Val308, and Val338–Lys358.

The protein belongs to the glycosyltransferase 4 family. MraY subfamily. The cofactor is Mg(2+).

It localises to the cell inner membrane. The enzyme catalyses UDP-N-acetyl-alpha-D-muramoyl-L-alanyl-gamma-D-glutamyl-meso-2,6-diaminopimeloyl-D-alanyl-D-alanine + di-trans,octa-cis-undecaprenyl phosphate = di-trans,octa-cis-undecaprenyl diphospho-N-acetyl-alpha-D-muramoyl-L-alanyl-D-glutamyl-meso-2,6-diaminopimeloyl-D-alanyl-D-alanine + UMP. It functions in the pathway cell wall biogenesis; peptidoglycan biosynthesis. Catalyzes the initial step of the lipid cycle reactions in the biosynthesis of the cell wall peptidoglycan: transfers peptidoglycan precursor phospho-MurNAc-pentapeptide from UDP-MurNAc-pentapeptide onto the lipid carrier undecaprenyl phosphate, yielding undecaprenyl-pyrophosphoryl-MurNAc-pentapeptide, known as lipid I. This chain is Phospho-N-acetylmuramoyl-pentapeptide-transferase, found in Shewanella oneidensis (strain ATCC 700550 / JCM 31522 / CIP 106686 / LMG 19005 / NCIMB 14063 / MR-1).